The following is a 481-amino-acid chain: Glutamate--tRNA ligase (481 aa).

The 'HIGH' region signature appears at Pro-9–Thr-19. The Zn(2+) site is built by Cys-98, Cys-100, His-125, and Asp-127. Positions Lys-248 to Arg-252 match the 'KMSKS' region motif. Position 251 (Lys-251) interacts with ATP.

The protein belongs to the class-I aminoacyl-tRNA synthetase family. Glutamate--tRNA ligase type 1 subfamily. In terms of assembly, monomer. Zn(2+) is required as a cofactor.

It localises to the cytoplasm. The catalysed reaction is tRNA(Glu) + L-glutamate + ATP = L-glutamyl-tRNA(Glu) + AMP + diphosphate. Catalyzes the attachment of glutamate to tRNA(Glu) in a two-step reaction: glutamate is first activated by ATP to form Glu-AMP and then transferred to the acceptor end of tRNA(Glu). This chain is Glutamate--tRNA ligase, found in Synechococcus elongatus (strain ATCC 33912 / PCC 7942 / FACHB-805) (Anacystis nidulans R2).